The chain runs to 384 residues: Troponin T (384 aa).

Residues 1–15 (MSDEEEYSEEEEEVP) show a composition bias toward acidic residues. Disordered regions lie at residues 1–23 (MSDE…PRHS), 61–169 (RAKE…KEQL), 237–257 (LRHK…KYPP), and 313–384 (PKWF…EEEE). 2 stretches are compositionally biased toward basic and acidic residues: residues 61–74 (RAKE…LKDK) and 81–126 (MRAD…EKKR). Basic and acidic residues predominate over residues 316–327 (FGERPGKKKGDP). Acidic residues predominate over residues 328–384 (ESPEEEEVKADAGVDDELEEPTFEPEPEPEPEEEAAEEEAEEEEEEEEEEEEEEEEE).

This sequence belongs to the troponin T family.

Functionally, troponin T is the tropomyosin-binding subunit of troponin, the thin filament regulatory complex which confers calcium-sensitivity to striated muscle actomyosin ATPase activity. This is Troponin T (TNT) from Periplaneta americana (American cockroach).